The chain runs to 188 residues: Ribosome maturation factor RimM (188 aa).

In terms of domain architecture, PRC barrel spans 98–174 (EGTFYYHDLR…HLTADAPAGL (77 aa)). Residues 169–188 (DAPAGLIGPEPGEEDGAAES) are disordered. The segment covering 179 to 188 (PGEEDGAAES) has biased composition (acidic residues).

Belongs to the RimM family. As to quaternary structure, binds ribosomal protein uS19.

The protein localises to the cytoplasm. In terms of biological role, an accessory protein needed during the final step in the assembly of 30S ribosomal subunit, possibly for assembly of the head region. Essential for efficient processing of 16S rRNA. May be needed both before and after RbfA during the maturation of 16S rRNA. It has affinity for free ribosomal 30S subunits but not for 70S ribosomes. The polypeptide is Ribosome maturation factor RimM (Deinococcus radiodurans (strain ATCC 13939 / DSM 20539 / JCM 16871 / CCUG 27074 / LMG 4051 / NBRC 15346 / NCIMB 9279 / VKM B-1422 / R1)).